A 186-amino-acid polypeptide reads, in one-letter code: Lipoprotein signal peptidase (186 aa).

Helical transmembrane passes span 8-28 (FFSVFKPGYLAFVAFGLFLDL), 44-64 (IPVLGDFFRLSLTFNTGFVFG), 66-86 (FQDNALPSLFATGFAIVFLIF), and 97-117 (AWGWNFVMAGAFGNFLDKFFV). Residues D142 and D164 contribute to the active site. Residues 157-177 (WPAFNVADSCVSIGIVILLFT) traverse the membrane as a helical segment.

The protein belongs to the peptidase A8 family.

The protein localises to the cell inner membrane. The enzyme catalyses Release of signal peptides from bacterial membrane prolipoproteins. Hydrolyzes -Xaa-Yaa-Zaa-|-(S,diacylglyceryl)Cys-, in which Xaa is hydrophobic (preferably Leu), and Yaa (Ala or Ser) and Zaa (Gly or Ala) have small, neutral side chains.. The protein operates within protein modification; lipoprotein biosynthesis (signal peptide cleavage). In terms of biological role, this protein specifically catalyzes the removal of signal peptides from prolipoproteins. The chain is Lipoprotein signal peptidase from Leptospira biflexa serovar Patoc (strain Patoc 1 / ATCC 23582 / Paris).